The primary structure comprises 335 residues: Probable peptide ABC transporter ATP-binding protein y4tR (335 aa).

The ABC transporter domain occupies Val15 to Met264. Gly49–Ser56 contacts ATP.

It belongs to the ABC transporter superfamily.

The protein resides in the cell inner membrane. Probably part of a binding-protein-dependent transport system y4tOPQRS for a peptide. Probably responsible for energy coupling to the transport system. This chain is Probable peptide ABC transporter ATP-binding protein y4tR, found in Sinorhizobium fredii (strain NBRC 101917 / NGR234).